The chain runs to 526 residues: Probable rhamnogalacturonase B (526 aa).

An N-terminal signal peptide occupies residues 1–20; the sequence is MHVNTLSVLSLVGLVPLAAA. A disulfide bridge connects residues cysteine 41 and cysteine 67. N-linked (GlcNAc...) asparagine glycosylation occurs at asparagine 144. Aspartate 218 functions as the Proton donor in the catalytic mechanism. A disulfide bridge links cysteine 220 with cysteine 237. Residues asparagine 238 and asparagine 253 are each glycosylated (N-linked (GlcNAc...) asparagine). The active site involves histidine 293. Residue asparagine 320 is glycosylated (N-linked (GlcNAc...) asparagine). Cystine bridges form between cysteine 343–cysteine 349 and cysteine 371–cysteine 380.

The protein belongs to the glycosyl hydrolase 28 family.

It is found in the secreted. It catalyses the reaction Endohydrolysis of alpha-D-GalA-(1-&gt;2)-alpha-L-Rha glycosidic bond in the rhamnogalacturonan I backbone with initial inversion of anomeric configuration releasing oligosaccharides with beta-D-GalA at the reducing end.. Its function is as follows. Pectinolytic enzymes consist of four classes of enzymes: pectine lyase, polygalacturonase, pectin methylesterase and rhamnogalacturonase. Hydrolyzes alpha-D-galacturonopyranosyl-(1,2)-alpha-L-rhamnopyranosyl linkages in the backbone of the hairy regions of pectins. This is Probable rhamnogalacturonase B (rhgB) from Aspergillus terreus (strain NIH 2624 / FGSC A1156).